A 404-amino-acid polypeptide reads, in one-letter code: Serine/threonine-protein phosphatase 2A regulatory subunit rsa-1 (404 aa).

In terms of assembly, part of a complex consisting of a common heterodimeric core enzyme, composed of catalytic subunit let-92 and constant regulatory subunit paa-1, that associates with a variety of regulatory subunits which confer distinct properties to the holoenzyme. Interacts with rsa-2, spd-5 and tpxl-1.

It is found in the cytoplasm. Its subcellular location is the cytoskeleton. The protein resides in the microtubule organizing center. The protein localises to the centrosome. Regulatory subunit of phosphatase let-92 which recruits let-92/paa-1 complex to the centrosomes, thereby regulating microtubule outgrowth from centrosomes and mitotic spindle assembly ensuring the stability of kinetochore microtubules. The protein is Serine/threonine-protein phosphatase 2A regulatory subunit rsa-1 of Caenorhabditis elegans.